Here is a 291-residue protein sequence, read N- to C-terminus: Tyrosine recombinase XerD (291 aa).

A Core-binding (CB) domain is found at 1–82; that stretch reads MEEGLIDRLL…ACKRLYIWME (82 aa). In terms of domain architecture, Tyr recombinase spans 103-285; that stretch reads NIPTLITEQQ…ANVWLQGVVK (183 aa). Active-site residues include Arg143, Lys167, His237, Arg240, and His263. Tyr272 (O-(3'-phospho-DNA)-tyrosine intermediate) is an active-site residue.

It belongs to the 'phage' integrase family. XerD subfamily. Forms a cyclic heterotetrameric complex composed of two molecules of XerC and two molecules of XerD.

Its subcellular location is the cytoplasm. Functionally, site-specific tyrosine recombinase, which acts by catalyzing the cutting and rejoining of the recombining DNA molecules. The XerC-XerD complex is essential to convert dimers of the bacterial chromosome into monomers to permit their segregation at cell division. It also contributes to the segregational stability of plasmids. This is Tyrosine recombinase XerD from Neisseria meningitidis serogroup B (strain ATCC BAA-335 / MC58).